The primary structure comprises 230 residues: Poxin (230 aa).

H43 acts as the Proton donor in catalysis. Y174 functions as the Shared with catalytic histidine of dimeric partner in the catalytic mechanism. K178 (proton acceptor; shared with catalytic histidine of dimeric partner) is an active-site residue.

This sequence belongs to the poxin family. As to quaternary structure, homodimer.

The catalysed reaction is 2',3'-cGAMP + H2O = Gp(2'-5')Ap(3') + H(+). In terms of biological role, nuclease that cleaves host 2',3'-cGAMP. The sequence is that of Poxin (P26) from Orgyia pseudotsugata multicapsid polyhedrosis virus (OpMNPV).